The primary structure comprises 155 residues: Ribosomal RNA large subunit methyltransferase H 1 (155 aa).

Residues leucine 76, glycine 108, and 127–132 each bind S-adenosyl-L-methionine; that span reads FSKMTF.

The protein belongs to the RNA methyltransferase RlmH family. In terms of assembly, homodimer.

The protein localises to the cytoplasm. The enzyme catalyses pseudouridine(1915) in 23S rRNA + S-adenosyl-L-methionine = N(3)-methylpseudouridine(1915) in 23S rRNA + S-adenosyl-L-homocysteine + H(+). Specifically methylates the pseudouridine at position 1915 (m3Psi1915) in 23S rRNA. The chain is Ribosomal RNA large subunit methyltransferase H 1 from Thermoanaerobacter pseudethanolicus (strain ATCC 33223 / 39E) (Clostridium thermohydrosulfuricum).